Here is a 52-residue protein sequence, read N- to C-terminus: Conotoxin Cal9.2c (52 aa).

Positions 1–6 are excised as a propeptide; sequence KKGVTL. Cystine bridges form between C14-C31, C19-C41, and C21-C46.

Expressed by the venom duct.

The protein resides in the secreted. Functionally, probable neurotoxin with unknown target. Possibly targets ion channels. The protein is Conotoxin Cal9.2c of Californiconus californicus (California cone).